Here is a 563-residue protein sequence, read N- to C-terminus: Anaerobic glycerol-3-phosphate dehydrogenase subunit A (563 aa).

20-48 (DVIIIGGGATGAGIARDCALRGIDCILLE) is a binding site for FAD.

It belongs to the FAD-dependent glycerol-3-phosphate dehydrogenase family. In terms of assembly, composed of a catalytic GlpA/B dimer and of membrane bound GlpC. FAD serves as cofactor. The cofactor is FMN.

The protein localises to the cell inner membrane. It carries out the reaction a quinone + sn-glycerol 3-phosphate = dihydroxyacetone phosphate + a quinol. It participates in polyol metabolism; glycerol degradation via glycerol kinase pathway; glycerone phosphate from sn-glycerol 3-phosphate (anaerobic route): step 1/1. This Haemophilus influenzae (strain ATCC 51907 / DSM 11121 / KW20 / Rd) protein is Anaerobic glycerol-3-phosphate dehydrogenase subunit A (glpA).